The chain runs to 1368 residues: DNA-directed RNA polymerase subunit beta (1368 aa).

The protein belongs to the RNA polymerase beta chain family. The RNAP catalytic core consists of 2 alpha, 1 beta, 1 beta' and 1 omega subunit. When a sigma factor is associated with the core the holoenzyme is formed, which can initiate transcription.

The catalysed reaction is RNA(n) + a ribonucleoside 5'-triphosphate = RNA(n+1) + diphosphate. In terms of biological role, DNA-dependent RNA polymerase catalyzes the transcription of DNA into RNA using the four ribonucleoside triphosphates as substrates. The sequence is that of DNA-directed RNA polymerase subunit beta from Cupriavidus taiwanensis (strain DSM 17343 / BCRC 17206 / CCUG 44338 / CIP 107171 / LMG 19424 / R1) (Ralstonia taiwanensis (strain LMG 19424)).